The primary structure comprises 401 residues: Carboxybiotin decarboxylase (401 aa).

A run of 10 helical transmembrane segments spans residues 20–40 (VISI…YFGF), 46–66 (PLIM…VLFL), 70–90 (VVGT…VNLM), 107–127 (LIAC…FILI), 131–151 (ASII…IIGI), 173–193 (MVLF…AIIA), 244–264 (LCLL…GIAI), 275–295 (LLET…LGAL), 306–326 (ISLI…GGVL), and 380–400 (VCGL…LFLL).

It localises to the cell membrane. It carries out the reaction N(6)-carboxybiotinyl-L-lysyl-[protein] + n Na(+)(in) + H(+) = N(6)-biotinyl-L-lysyl-[protein] + n Na(+)(out) + CO2. Functionally, beta subunit of the biotin-dependent malonate decarboxylase multienzyme complex (EC 7.2.4.4). Acts as an integral membrane-bound carboxybiotin protein decarboxylase by releasing the carboxyl group of the carboxylated biotin carrier MADF. The free energy of the decarboxylation reaction is used to pump Na(+) out of the cell. The polypeptide is Carboxybiotin decarboxylase (madB) (Malonomonas rubra).